Consider the following 279-residue polypeptide: 3-methyl-2-oxobutanoate hydroxymethyltransferase (279 aa).

Mg(2+) contacts are provided by Asp44 and Asp83. 3-methyl-2-oxobutanoate contacts are provided by residues 44 to 45, Asp83, and Lys113; that span reads DS. A Mg(2+)-binding site is contributed by Glu115. The active-site Proton acceptor is the Glu182.

Belongs to the PanB family. As to quaternary structure, homodecamer; pentamer of dimers. Requires Mg(2+) as cofactor.

It is found in the cytoplasm. The catalysed reaction is 3-methyl-2-oxobutanoate + (6R)-5,10-methylene-5,6,7,8-tetrahydrofolate + H2O = 2-dehydropantoate + (6S)-5,6,7,8-tetrahydrofolate. Its pathway is cofactor biosynthesis; (R)-pantothenate biosynthesis; (R)-pantoate from 3-methyl-2-oxobutanoate: step 1/2. In terms of biological role, catalyzes the reversible reaction in which hydroxymethyl group from 5,10-methylenetetrahydrofolate is transferred onto alpha-ketoisovalerate to form ketopantoate. The polypeptide is 3-methyl-2-oxobutanoate hydroxymethyltransferase (Dehalococcoides mccartyi (strain CBDB1)).